Reading from the N-terminus, the 440-residue chain is Glycerol-3-phosphate dehydrogenase [NAD(+)], chloroplastic (440 aa).

Residues 1 to 47 (MAAAAAATFLPHTPTPRRRLAVAVHSPTRRRLSLVFSGPPDGALSVA) constitute a chloroplast transit peptide. The interval 57 to 76 (EEAAAAVSAPRGGGGGGGKE) is disordered. Residues 114-119 (GGGSFG), F191, K214, and A248 contribute to the NAD(+) site. A substrate-binding site is contributed by K214. K299 serves as the catalytic Proton acceptor. Positions 363 and 389 each coordinate NAD(+). A substrate-binding site is contributed by 363–364 (RN).

The protein belongs to the NAD-dependent glycerol-3-phosphate dehydrogenase family.

It localises to the plastid. The protein localises to the chloroplast. The enzyme catalyses sn-glycerol 3-phosphate + NAD(+) = dihydroxyacetone phosphate + NADH + H(+). It participates in membrane lipid metabolism; glycerophospholipid metabolism. Required to supply glycerol-3-phosphate in the chloroplast for the synthesis of glycerolipids. This chain is Glycerol-3-phosphate dehydrogenase [NAD(+)], chloroplastic, found in Oryza sativa subsp. japonica (Rice).